A 327-amino-acid chain; its full sequence is Transaldolase (327 aa).

Residue K132 is the Schiff-base intermediate with substrate of the active site.

The protein belongs to the transaldolase family. Type 1 subfamily. As to quaternary structure, homodimer.

The protein localises to the cytoplasm. The enzyme catalyses D-sedoheptulose 7-phosphate + D-glyceraldehyde 3-phosphate = D-erythrose 4-phosphate + beta-D-fructose 6-phosphate. It functions in the pathway carbohydrate degradation; pentose phosphate pathway; D-glyceraldehyde 3-phosphate and beta-D-fructose 6-phosphate from D-ribose 5-phosphate and D-xylulose 5-phosphate (non-oxidative stage): step 2/3. In terms of biological role, transaldolase is important for the balance of metabolites in the pentose-phosphate pathway. This is Transaldolase from Chlamydia caviae (strain ATCC VR-813 / DSM 19441 / 03DC25 / GPIC) (Chlamydophila caviae).